A 186-amino-acid chain; its full sequence is Shikimate kinase (186 aa).

15 to 20 (GAGKTT) is a binding site for ATP. T19 provides a ligand contact to Mg(2+). Substrate-binding residues include D37, R61, and G83. R121 lines the ATP pocket. Residue R140 coordinates substrate.

The protein belongs to the shikimate kinase family. As to quaternary structure, monomer. Mg(2+) is required as a cofactor.

Its subcellular location is the cytoplasm. It carries out the reaction shikimate + ATP = 3-phosphoshikimate + ADP + H(+). The protein operates within metabolic intermediate biosynthesis; chorismate biosynthesis; chorismate from D-erythrose 4-phosphate and phosphoenolpyruvate: step 5/7. Catalyzes the specific phosphorylation of the 3-hydroxyl group of shikimic acid using ATP as a cosubstrate. The sequence is that of Shikimate kinase from Psychrobacter arcticus (strain DSM 17307 / VKM B-2377 / 273-4).